The chain runs to 76 residues: Protein OPG128 (76 aa).

The cysteines at positions 17 and 21 are disulfide-linked.

The protein belongs to the orthopoxvirus OPG128 family. As to quaternary structure, interacts with sulfhydryl oxidase OPG072; this interaction involves formation of a transient disulfide-bonded intermediate, allowing disulfide bond transfer. Interacts with OPG088; this interaction involves formation of a transient disulfide-bonded intermediate, allowing disulfide bond transfer.

In terms of biological role, late protein which probably participates in disulfide bond formation by functioning as a thiol-disulfide transfer protein between membrane-associated OPG072 and OPG08. The complete pathway for formation of disulfide bonds in intracellular virion membrane proteins sequentially involves oxidation of OPG072, OPG128 and OPG08. This Bos taurus (Bovine) protein is Protein OPG128 (OPG128).